Here is a 266-residue protein sequence, read N- to C-terminus: MRLIPLNRAEQVGAWSAQHIVNRINAFNPTADRPFVLGLPTGGTPLNTYKKLIELHKAGEVSFKNVVTFNMDEYVGLPADHPESYRTFMHENFFNHIDIQPENINLLNGNAEDHEAECQRYEDKIKSYGRINLFMGGVGNDGHIAFNEPASSLSSRTRIKTLTEDTRIANSRFFGGDMNLVPEYSLTIGVGTLLDSEEIMILITGHNKGLALQAAVEGSVNHLWTVSALQLHPKSVIVCDEPSTQELKVKTVKYFQQLEAKNMEGF.

Aspartate 72 serves as the catalytic Proton acceptor; for enolization step. Catalysis depends on aspartate 141, which acts as the For ring-opening step. The active-site Proton acceptor; for ring-opening step is histidine 143. Glutamate 148 acts as the For ring-opening step in catalysis.

This sequence belongs to the glucosamine/galactosamine-6-phosphate isomerase family. NagB subfamily. Homohexamer.

The enzyme catalyses alpha-D-glucosamine 6-phosphate + H2O = beta-D-fructose 6-phosphate + NH4(+). It participates in amino-sugar metabolism; N-acetylneuraminate degradation; D-fructose 6-phosphate from N-acetylneuraminate: step 5/5. Its activity is regulated as follows. Allosterically activated by N-acetylglucosamine 6-phosphate (GlcNAc6P). Functionally, catalyzes the reversible isomerization-deamination of glucosamine 6-phosphate (GlcN6P) to form fructose 6-phosphate (Fru6P) and ammonium ion. The polypeptide is Glucosamine-6-phosphate deaminase (Aliivibrio fischeri (strain ATCC 700601 / ES114) (Vibrio fischeri)).